The following is a 261-amino-acid chain: uncharacterized protein (261 aa).

The disordered stretch occupies residues 1–22; the sequence is MGVADNEYISVPTGEPVQQQPQ. The next 3 helical transmembrane spans lie at 92–112, 122–142, and 147–167; these read IIIL…ILGL, IVVM…IFLF, and INTI…LMNY.

It localises to the membrane. This is an uncharacterized protein from Dictyostelium discoideum (Social amoeba).